Consider the following 508-residue polypeptide: Photosystem II CP47 reaction center protein (508 aa).

Transmembrane regions (helical) follow at residues 21-36 (AVHI…WAGS), 101-115 (IVFS…TWHW), 140-156 (GIHL…FGAF), 203-218 (VAAG…FHLS), 237-252 (VLSS…AFIV), and 457-472 (TFAL…HGAR).

Belongs to the PsbB/PsbC family. PsbB subfamily. PSII is composed of 1 copy each of membrane proteins PsbA, PsbB, PsbC, PsbD, PsbE, PsbF, PsbH, PsbI, PsbJ, PsbK, PsbL, PsbM, PsbT, PsbX, PsbY, PsbZ, Psb30/Ycf12, at least 3 peripheral proteins of the oxygen-evolving complex and a large number of cofactors. It forms dimeric complexes. It depends on Binds multiple chlorophylls. PSII binds additional chlorophylls, carotenoids and specific lipids. as a cofactor.

It is found in the plastid. Its subcellular location is the chloroplast thylakoid membrane. Functionally, one of the components of the core complex of photosystem II (PSII). It binds chlorophyll and helps catalyze the primary light-induced photochemical processes of PSII. PSII is a light-driven water:plastoquinone oxidoreductase, using light energy to abstract electrons from H(2)O, generating O(2) and a proton gradient subsequently used for ATP formation. This chain is Photosystem II CP47 reaction center protein, found in Welwitschia mirabilis (Tree tumbo).